The following is a 116-amino-acid chain: NADPH-dependent 7-cyano-7-deazaguanine reductase (116 aa).

Residue cysteine 31 is the Thioimide intermediate of the active site. The active-site Proton donor is aspartate 38. Residues 53–55 (IEL) and 72–73 (YE) contribute to the substrate site.

Belongs to the GTP cyclohydrolase I family. QueF type 1 subfamily.

It localises to the cytoplasm. The catalysed reaction is 7-aminomethyl-7-carbaguanine + 2 NADP(+) = 7-cyano-7-deazaguanine + 2 NADPH + 3 H(+). It functions in the pathway tRNA modification; tRNA-queuosine biosynthesis. Functionally, catalyzes the NADPH-dependent reduction of 7-cyano-7-deazaguanine (preQ0) to 7-aminomethyl-7-deazaguanine (preQ1). This Chlorobaculum parvum (strain DSM 263 / NCIMB 8327) (Chlorobium vibrioforme subsp. thiosulfatophilum) protein is NADPH-dependent 7-cyano-7-deazaguanine reductase.